The sequence spans 268 residues: Tropinone reductase homolog At2g29370 (268 aa).

Position 22–46 (22–46) interacts with NADP(+); it reads LVTGGSKGLGKAVVEELAMLGARVH. Position 155 (Ser155) interacts with substrate. The active-site Proton acceptor is Tyr168.

It belongs to the short-chain dehydrogenases/reductases (SDR) family. SDR65C subfamily.

This Arabidopsis thaliana (Mouse-ear cress) protein is Tropinone reductase homolog At2g29370.